Reading from the N-terminus, the 196-residue chain is Imidazoleglycerol-phosphate dehydratase (196 aa).

This sequence belongs to the imidazoleglycerol-phosphate dehydratase family.

It localises to the cytoplasm. The catalysed reaction is D-erythro-1-(imidazol-4-yl)glycerol 3-phosphate = 3-(imidazol-4-yl)-2-oxopropyl phosphate + H2O. The protein operates within amino-acid biosynthesis; L-histidine biosynthesis; L-histidine from 5-phospho-alpha-D-ribose 1-diphosphate: step 6/9. This Caulobacter vibrioides (strain ATCC 19089 / CIP 103742 / CB 15) (Caulobacter crescentus) protein is Imidazoleglycerol-phosphate dehydratase.